The following is an 89-amino-acid chain: Small ribosomal subunit protein bS20 (89 aa).

Positions methionine 1–lysine 27 are disordered. A compositionally biased stretch (basic and acidic residues) spans alanine 7–arginine 18.

This sequence belongs to the bacterial ribosomal protein bS20 family.

Binds directly to 16S ribosomal RNA. The protein is Small ribosomal subunit protein bS20 of Buchnera aphidicola subsp. Schizaphis graminum (strain Sg).